Reading from the N-terminus, the 316-residue chain is Phosphate acyltransferase (316 aa).

The protein belongs to the PlsX family. In terms of assembly, homodimer. Probably interacts with PlsY.

The protein localises to the cytoplasm. It carries out the reaction a fatty acyl-[ACP] + phosphate = an acyl phosphate + holo-[ACP]. Its pathway is lipid metabolism; phospholipid metabolism. Functionally, catalyzes the reversible formation of acyl-phosphate (acyl-PO(4)) from acyl-[acyl-carrier-protein] (acyl-ACP). This enzyme utilizes acyl-ACP as fatty acyl donor, but not acyl-CoA. The protein is Phosphate acyltransferase of Chlamydia caviae (strain ATCC VR-813 / DSM 19441 / 03DC25 / GPIC) (Chlamydophila caviae).